A 326-amino-acid polypeptide reads, in one-letter code: MSKPVRMEPGVKLRDGDKMALIPVKFMPDPNEEVLRKPDWMRIKLPPSSQKIEHIKSTLRKNKLHSVCEEASCPNLAECFNHGTATFMIMGAICTRRCPFCDVAHGRPLALDPDEPQKLALTIKEMGLKYVVITSVDRDDLRDGGAQHFADCIKQIREHSPQTRIEILTPDFRGRMEQALEVFRETPPDVFNHNLETAPRMYRVARPGADYKWSLELLRRIKEMHPHVPTKSGVMMGLGETNEEIVQVLKDLREHGVNMLTLGQYLQPSRHHLPVKRYVPPAEFDELKDVAMGLGFSHAACGPFVRSSYHADLQAKGEEVVGYKAK.

Residues cysteine 68, cysteine 73, cysteine 79, cysteine 94, cysteine 98, cysteine 101, and serine 308 each coordinate [4Fe-4S] cluster. One can recognise a Radical SAM core domain in the interval 80–297 (FNHGTATFMI…KDVAMGLGFS (218 aa)).

It belongs to the radical SAM superfamily. Lipoyl synthase family. Requires [4Fe-4S] cluster as cofactor.

It localises to the cytoplasm. The enzyme catalyses [[Fe-S] cluster scaffold protein carrying a second [4Fe-4S](2+) cluster] + N(6)-octanoyl-L-lysyl-[protein] + 2 oxidized [2Fe-2S]-[ferredoxin] + 2 S-adenosyl-L-methionine + 4 H(+) = [[Fe-S] cluster scaffold protein] + N(6)-[(R)-dihydrolipoyl]-L-lysyl-[protein] + 4 Fe(3+) + 2 hydrogen sulfide + 2 5'-deoxyadenosine + 2 L-methionine + 2 reduced [2Fe-2S]-[ferredoxin]. The protein operates within protein modification; protein lipoylation via endogenous pathway; protein N(6)-(lipoyl)lysine from octanoyl-[acyl-carrier-protein]: step 2/2. Its function is as follows. Catalyzes the radical-mediated insertion of two sulfur atoms into the C-6 and C-8 positions of the octanoyl moiety bound to the lipoyl domains of lipoate-dependent enzymes, thereby converting the octanoylated domains into lipoylated derivatives. In Aeromonas salmonicida (strain A449), this protein is Lipoyl synthase.